The primary structure comprises 368 residues: MDPAQNQPNTEPPAAPAVEEAQGVNNSEAEAPAPAALSSVSPANPPITAVPEATAPTTSQESTIPGAGYKLISTIEGHTKSISAVKFSPCGKFLGTSSADKTVKIWNMSDLSCERTLTGHKLGVNDFAWSADSKSIVTASDDKTLKIYEVPTVKMAKTLKGHTNYVFCCNFNPQSSLVVSGSFDESVRIWDVRTGMCVKTLPAHSDPVSAVSFNRDGSLITSGSYDGLVRIWDTANGQCVKTLVDDENPPVAFVKFSPNGKYILSSNLDNTLKLWDFGKGKTLKQYQGHENNKYCIFANFSVTGGKWIISGSEDCKIYVWNLQTKEVVQSLEGHTQAVIASDCHPMQNMIASGALEPDNTIRIWRSDS.

Residues 1–64 form a disordered region; sequence MDPAQNQPNT…APTTSQESTI (64 aa). Positions 16-42 are enriched in low complexity; it reads PAVEEAQGVNNSEAEAPAPAALSSVSP. 7 WD repeats span residues 77 to 116, 119 to 158, 161 to 200, 203 to 242, 246 to 285, 288 to 330, and 333 to 368; these read GHTK…CERT, GHKL…MAKT, GHTN…CVKT, AHSD…CVKT, DENP…TLKQ, GHEN…VVQS, and GHTQ…RSDS.

The polypeptide is WD repeat-containing protein wdr-5.1 (Caenorhabditis briggsae).